We begin with the raw amino-acid sequence, 396 residues long: Digeranylgeranylglycerophospholipid reductase 2 (396 aa).

10 residues coordinate FAD: A13, E32, C43, A44, G46, R92, A116, D278, G290, and L291.

The protein belongs to the geranylgeranyl reductase family. DGGGPL reductase subfamily. Requires FAD as cofactor.

The enzyme catalyses a 2,3-bis-O-phytanyl-sn-glycerol 1-phospholipid + 8 A = a 2,3-bis-O-(geranylgeranyl)-sn-glycerol 1-phospholipid + 8 AH2. The catalysed reaction is 2,3-bis-O-(phytanyl)-sn-glycerol 1-phosphate + 8 A = 2,3-bis-O-(geranylgeranyl)-sn-glycerol 1-phosphate + 8 AH2. It catalyses the reaction CDP-2,3-bis-O-(geranylgeranyl)-sn-glycerol + 8 AH2 = CDP-2,3-bis-O-(phytanyl)-sn-glycerol + 8 A. It carries out the reaction archaetidylserine + 8 AH2 = 2,3-bis-O-phytanyl-sn-glycero-3-phospho-L-serine + 8 A. It functions in the pathway membrane lipid metabolism; glycerophospholipid metabolism. In terms of biological role, is involved in the reduction of 2,3-digeranylgeranylglycerophospholipids (unsaturated archaeols) into 2,3-diphytanylglycerophospholipids (saturated archaeols) in the biosynthesis of archaeal membrane lipids. Catalyzes the formation of archaetidic acid (2,3-di-O-phytanyl-sn-glyceryl phosphate) from 2,3-di-O-geranylgeranylglyceryl phosphate (DGGGP) via the hydrogenation of each double bond of the isoprenoid chains. Is also probably able to reduce double bonds of geranyl groups in CDP-2,3-bis-O-(geranylgeranyl)-sn-glycerol and archaetidylserine, thus acting at various stages in the biosynthesis of archaeal membrane lipids. This chain is Digeranylgeranylglycerophospholipid reductase 2, found in Methanopyrus kandleri (strain AV19 / DSM 6324 / JCM 9639 / NBRC 100938).